A 486-amino-acid chain; its full sequence is Cardiolipin synthase A (486 aa).

The next 2 helical transmembrane spans lie at 3 to 23 (TFYT…IAGV) and 38 to 58 (MAWL…YLSF). PLD phosphodiesterase domains follow at residues 219–246 (MDLR…VDPR) and 399–426 (EGGL…DMRS). Active-site residues include His224, Lys226, Asp231, His404, Lys406, and Asp411.

Belongs to the phospholipase D family. Cardiolipin synthase subfamily. ClsA sub-subfamily.

The protein localises to the cell inner membrane. It catalyses the reaction 2 a 1,2-diacyl-sn-glycero-3-phospho-(1'-sn-glycerol) = a cardiolipin + glycerol. Catalyzes the reversible phosphatidyl group transfer from one phosphatidylglycerol molecule to another to form cardiolipin (CL) (diphosphatidylglycerol) and glycerol. This Yersinia pseudotuberculosis serotype IB (strain PB1/+) protein is Cardiolipin synthase A.